A 152-amino-acid polypeptide reads, in one-letter code: Antiholin-like protein LrgA (152 aa).

4 helical membrane passes run tyrosine 23 to glutamate 43, phenylalanine 45 to cysteine 65, valine 77 to isoleucine 97, and isoleucine 108 to serine 128.

The protein belongs to the CidA/LrgA family. LrgA subfamily.

The protein resides in the cell membrane. Inhibits the expression or activity of extracellular murein hydrolases by interacting, possibly with LrgB, with the holin-like proteins CidA and/or CidB. The LrgAB and CidAB proteins may affect the proton motive force of the membrane. May be involved in programmed cell death (PCD), possibly triggering PCD in response to antibiotics and environmental stresses. The sequence is that of Antiholin-like protein LrgA from Staphylococcus epidermidis (strain ATCC 12228 / FDA PCI 1200).